The sequence spans 243 residues: 1-(5-phosphoribosyl)-5-[(5-phosphoribosylamino)methylideneamino] imidazole-4-carboxamide isomerase (243 aa).

The active-site Proton acceptor is the Asp-8. The active-site Proton donor is Asp-130.

This sequence belongs to the HisA/HisF family.

The protein resides in the cytoplasm. It catalyses the reaction 1-(5-phospho-beta-D-ribosyl)-5-[(5-phospho-beta-D-ribosylamino)methylideneamino]imidazole-4-carboxamide = 5-[(5-phospho-1-deoxy-D-ribulos-1-ylimino)methylamino]-1-(5-phospho-beta-D-ribosyl)imidazole-4-carboxamide. Its pathway is amino-acid biosynthesis; L-histidine biosynthesis; L-histidine from 5-phospho-alpha-D-ribose 1-diphosphate: step 4/9. The protein is 1-(5-phosphoribosyl)-5-[(5-phosphoribosylamino)methylideneamino] imidazole-4-carboxamide isomerase of Cellvibrio japonicus (strain Ueda107) (Pseudomonas fluorescens subsp. cellulosa).